The chain runs to 595 residues: Tripeptidyl-peptidase SED3 (595 aa).

The N-terminal stretch at 1–22 (MLLPWQQTIIILFLGVNSLVAA) is a signal peptide. A propeptide spans 23–201 (LRNTYRTVEE…KLETIQLSSN (179 aa)) (removed in mature form). Asn-207, Asn-264, and Asn-278 each carry an N-linked (GlcNAc...) asparagine glycan. Positions 209–595 (TITPQCLRDI…EILAKIVRDL (387 aa)) constitute a Peptidase S53 domain. Active-site charge relay system residues include Glu-285 and Asp-289. Residues Asn-298 and Asn-365 are each glycosylated (N-linked (GlcNAc...) asparagine). The active-site Charge relay system is the Ser-499. Residues Asp-541 and Ile-542 each coordinate Ca(2+). Asn-554, Asn-557, and Asn-569 each carry an N-linked (GlcNAc...) asparagine glycan. Residues Gly-573 and Asp-575 each contribute to the Ca(2+) site.

Ca(2+) serves as cofactor.

Its subcellular location is the secreted. It is found in the extracellular space. It catalyses the reaction Release of an N-terminal tripeptide from a polypeptide.. Functionally, secreted tripeptidyl-peptidase which degrades proteins at acidic pHs and is involved in virulence. This Arthroderma otae (strain ATCC MYA-4605 / CBS 113480) (Microsporum canis) protein is Tripeptidyl-peptidase SED3 (SED3).